Consider the following 24-residue polypeptide: Heptapoietin A light chain (24 aa).

In terms of assembly, heterodimer of a heavy and a light chain linked by disulfide bond(s).

In terms of biological role, HPTA is an acidic heparin-binding growth factor for hepatocytes. The protein is Heptapoietin A light chain of Oryctolagus cuniculus (Rabbit).